A 502-amino-acid polypeptide reads, in one-letter code: Betaine aldehyde dehydrogenase, chloroplastic (502 aa).

A chloroplast-targeting transit peptide spans 1-7; sequence MAFPIPA. 240 to 245 is an NAD(+) binding site; it reads GSSATG. Glutamate 262 acts as the Proton acceptor in catalysis. Catalysis depends on cysteine 296, which acts as the Nucleophile.

The protein belongs to the aldehyde dehydrogenase family. As to quaternary structure, homodimer.

The protein resides in the plastid. It is found in the chloroplast. It carries out the reaction betaine aldehyde + NAD(+) + H2O = glycine betaine + NADH + 2 H(+). It functions in the pathway amine and polyamine biosynthesis; betaine biosynthesis via choline pathway; betaine from betaine aldehyde: step 1/1. This Atriplex hortensis (Mountain spinach) protein is Betaine aldehyde dehydrogenase, chloroplastic.